Reading from the N-terminus, the 405-residue chain is Tyrosine--tRNA ligase (405 aa).

The 'HIGH' region motif lies at 48 to 57; that stretch reads PSRPDLHLGH. The 'KMSKS' region signature appears at 232–236; it reads KMSKS. Lys235 lines the ATP pocket. An S4 RNA-binding domain is found at 339–400; the sequence is LPLVDLLTTL…AGKRKFFRIA (62 aa).

It belongs to the class-I aminoacyl-tRNA synthetase family. TyrS type 2 subfamily. In terms of assembly, homodimer.

It localises to the cytoplasm. It catalyses the reaction tRNA(Tyr) + L-tyrosine + ATP = L-tyrosyl-tRNA(Tyr) + AMP + diphosphate + H(+). Its function is as follows. Catalyzes the attachment of tyrosine to tRNA(Tyr) in a two-step reaction: tyrosine is first activated by ATP to form Tyr-AMP and then transferred to the acceptor end of tRNA(Tyr). The protein is Tyrosine--tRNA ligase of Chlorobium luteolum (strain DSM 273 / BCRC 81028 / 2530) (Pelodictyon luteolum).